The sequence spans 344 residues: Holliday junction branch migration complex subunit RuvB (344 aa).

Over residues 1–10 (MAIQSSSSGS) the composition is skewed to low complexity. Residues 1-37 (MAIQSSSSGSKPPAPKRLVAPEATAAEGDGGRDEGLR) form a disordered region. Residues 13–197 (PAPKRLVAPE…FGLIQRLEFY (185 aa)) are large ATPase domain (RuvB-L). ATP is bound by residues Leu-36, Arg-37, Gly-78, Lys-81, Thr-82, Thr-83, 144–146 (EDF), Arg-187, Tyr-197, and Arg-234. Thr-82 is a Mg(2+) binding site. The segment at 198 to 268 (SCSDLEAIVS…VVVEALAMHR (71 aa)) is small ATPAse domain (RuvB-S). The tract at residues 271–344 (GRGLDPSDRR…DAGRAHLEAA (74 aa)) is head domain (RuvB-H). DNA is bound by residues Arg-326 and Arg-331.

Belongs to the RuvB family. As to quaternary structure, homohexamer. Forms an RuvA(8)-RuvB(12)-Holliday junction (HJ) complex. HJ DNA is sandwiched between 2 RuvA tetramers; dsDNA enters through RuvA and exits via RuvB. An RuvB hexamer assembles on each DNA strand where it exits the tetramer. Each RuvB hexamer is contacted by two RuvA subunits (via domain III) on 2 adjacent RuvB subunits; this complex drives branch migration. In the full resolvosome a probable DNA-RuvA(4)-RuvB(12)-RuvC(2) complex forms which resolves the HJ.

It is found in the cytoplasm. The enzyme catalyses ATP + H2O = ADP + phosphate + H(+). Functionally, the RuvA-RuvB-RuvC complex processes Holliday junction (HJ) DNA during genetic recombination and DNA repair, while the RuvA-RuvB complex plays an important role in the rescue of blocked DNA replication forks via replication fork reversal (RFR). RuvA specifically binds to HJ cruciform DNA, conferring on it an open structure. The RuvB hexamer acts as an ATP-dependent pump, pulling dsDNA into and through the RuvAB complex. RuvB forms 2 homohexamers on either side of HJ DNA bound by 1 or 2 RuvA tetramers; 4 subunits per hexamer contact DNA at a time. Coordinated motions by a converter formed by DNA-disengaged RuvB subunits stimulates ATP hydrolysis and nucleotide exchange. Immobilization of the converter enables RuvB to convert the ATP-contained energy into a lever motion, pulling 2 nucleotides of DNA out of the RuvA tetramer per ATP hydrolyzed, thus driving DNA branch migration. The RuvB motors rotate together with the DNA substrate, which together with the progressing nucleotide cycle form the mechanistic basis for DNA recombination by continuous HJ branch migration. Branch migration allows RuvC to scan DNA until it finds its consensus sequence, where it cleaves and resolves cruciform DNA. This Synechococcus sp. (strain RCC307) protein is Holliday junction branch migration complex subunit RuvB.